Consider the following 326-residue polypeptide: Zona pellucida-binding protein 2 (326 aa).

The N-terminal stretch at 1–20 is a signal peptide; the sequence is MLAWALLSAVLWSLAGVGSA. 3 N-linked (GlcNAc...) asparagine glycosylation sites follow: N86, N220, and N256.

It belongs to the zona pellucida-binding protein Sp38 family. In terms of processing, N-glycosylated.

It is found in the secreted. The protein resides in the cytoplasmic vesicle. Its subcellular location is the secretory vesicle. It localises to the acrosome. Its function is as follows. Is implicated in sperm-oocyte interaction during fertilization. In Rattus norvegicus (Rat), this protein is Zona pellucida-binding protein 2 (Zpbp2).